A 132-amino-acid polypeptide reads, in one-letter code: Large ribosomal subunit protein uL14 (132 aa).

This sequence belongs to the universal ribosomal protein uL14 family. In terms of assembly, part of the 50S ribosomal subunit. Forms a cluster with proteins L3 and L24e, part of which may contact the 16S rRNA in 2 intersubunit bridges.

Binds to 23S rRNA. Forms part of two intersubunit bridges in the 70S ribosome. This is Large ribosomal subunit protein uL14 from Methanococcus maripaludis (strain C5 / ATCC BAA-1333).